Reading from the N-terminus, the 324-residue chain is Bile salt hydrolase/transferase (324 aa).

Residue Cys-2 is the Nucleophile; acyl-thioester intermediate of the active site. Residues Cys-2 and Arg-16 each coordinate deoxycholate. Asn-79 lines the taurine pocket.

Belongs to the peptidase C59 family. In terms of assembly, homotetramer. The tetramer consists of a dimer of dimers.

It catalyses the reaction glycocholate + H2O = cholate + glycine. It carries out the reaction glycodeoxycholate + H2O = deoxycholate + glycine. The enzyme catalyses chenodeoxycholate + glycine = glycochenodeoxycholate + H2O. The catalysed reaction is cholate + taurine = taurocholate + H2O. It catalyses the reaction taurodeoxycholate + H2O = deoxycholate + taurine. It carries out the reaction taurochenodeoxycholate + H2O = chenodeoxycholate + taurine. The enzyme catalyses an L-alpha-amino acid + cholate = an N-choloyl-L-alpha-amino acid + H2O. The catalysed reaction is an L-alpha-amino acid + taurocholate = an N-choloyl-L-alpha-amino acid + taurine. It catalyses the reaction glycocholate + an L-alpha-amino acid = an N-choloyl-L-alpha-amino acid + glycine. The protein operates within lipid metabolism; bile acid biosynthesis. In terms of biological role, possesses dual functions in bile acid metabolism. Acts as a bile salt hydrolase that catalyzes the deconjugation of glycine- and taurine-linked bile salts, which occurs naturally in the intestines of animals, releasing amino acid residues and deconjugated bile salts (bile acids). Can hydrolyze the amide bond in the bile salts glycocholate (GCA), glycodeoxycholate (GDCA), glycochenodeoxycholate (GCDCA), taurocholate (TCA), taurodeoxycholate (TDCA) and taurochenodeoxycholate (TCDCA). Shows a preference for glycine-conjugated bile acids as substrates. Also acts as an amine N-acyltransferase that conjugates a wide variety of amino acids to conjugated and non-conjugated bile acids, thus producing bacterial bile acid amidates (BBAAs) - also named microbially conjugated bile acids (MCBAs) - in the gastrointestinal tract. These BBAAs may facilitate communication between the microbiota and host through the activation of host ligand-activated transcription factors. The chain is Bile salt hydrolase/transferase from Lactiplantibacillus plantarum (strain ATCC BAA-793 / NCIMB 8826 / WCFS1) (Lactobacillus plantarum).